Consider the following 431-residue polypeptide: Histidinol dehydrogenase (431 aa).

NAD(+)-binding residues include Tyr130, Gln191, and Asn214. Positions 237, 259, and 262 each coordinate substrate. Residues Gln259 and His262 each contribute to the Zn(2+) site. Active-site proton acceptor residues include Glu327 and His328. 4 residues coordinate substrate: His328, Asp361, Glu415, and His420. Residue Asp361 coordinates Zn(2+). Zn(2+) is bound at residue His420.

Belongs to the histidinol dehydrogenase family. Zn(2+) serves as cofactor.

The catalysed reaction is L-histidinol + 2 NAD(+) + H2O = L-histidine + 2 NADH + 3 H(+). The protein operates within amino-acid biosynthesis; L-histidine biosynthesis; L-histidine from 5-phospho-alpha-D-ribose 1-diphosphate: step 9/9. Its function is as follows. Catalyzes the sequential NAD-dependent oxidations of L-histidinol to L-histidinaldehyde and then to L-histidine. The protein is Histidinol dehydrogenase of Syntrophotalea carbinolica (strain DSM 2380 / NBRC 103641 / GraBd1) (Pelobacter carbinolicus).